We begin with the raw amino-acid sequence, 299 residues long: Putative ammonium transporter 4 member 1 (299 aa).

The next 5 membrane-spanning stretches (helical) occupy residues 16–36, 59–79, 104–124, 158–178, and 218–238; these read AWPL…LVIL, VLLT…GFNG, LLVW…ISAV, VLHT…LLLL, and AGIA…CLAV.

Belongs to the ammonia transporter channel (TC 1.A.11.2) family.

The protein resides in the membrane. The sequence is that of Putative ammonium transporter 4 member 1 (AMT4-1) from Oryza sativa subsp. japonica (Rice).